We begin with the raw amino-acid sequence, 365 residues long: Peptide chain release factor 2 (365 aa).

Residue Gln251 is modified to N5-methylglutamine.

This sequence belongs to the prokaryotic/mitochondrial release factor family. In terms of processing, methylated by PrmC. Methylation increases the termination efficiency of RF2.

The protein resides in the cytoplasm. Functionally, peptide chain release factor 2 directs the termination of translation in response to the peptide chain termination codons UGA and UAA. The protein is Peptide chain release factor 2 of Neorickettsia sennetsu (strain ATCC VR-367 / Miyayama) (Ehrlichia sennetsu).